The sequence spans 90 residues: Small ribosomal subunit protein uS17 (90 aa).

Belongs to the universal ribosomal protein uS17 family. In terms of assembly, part of the 30S ribosomal subunit.

In terms of biological role, one of the primary rRNA binding proteins, it binds specifically to the 5'-end of 16S ribosomal RNA. This is Small ribosomal subunit protein uS17 from Burkholderia multivorans (strain ATCC 17616 / 249).